A 456-amino-acid polypeptide reads, in one-letter code: MSISESSPAATSLPNGDCGRPRARSGGNRVTVVLGAQWGDEGKGKVVDLLAQDADIVCRCQGGNNAGHTVVVDSVEYDFHLLPSGIINPNVTAFIGNGVVIHLPGLFEEAEKNVQKGKGLDGWEKRLIISDRAHIVFDFHQAADGIQEQQRQEQAGKNLGTTKKGIGPVYSSKAARSGLRMCDLVSDFDGFSERFKVLANQYKSIYPTLEIDIEGELQQLKGYMERIKPMVKDGVYFLYEALHGPPKKILVEGANAALLDIDFGTYPFVTSSNCTVGGVCTGLGMPPQNVGEVYGVVKAYTTRVGIGAFPTEQDNEIGELLQTRGREFGVTTGRKRRCGWLDLVSLKYAHMINGFTALALTKLDILDMFTEIKVGVAYKLDGETIPHFPANQEVLNKVEVQYKTLPGWNTDISNARTFKELPVNAQNYVRFIEDELQIPVKWIGVGKSRESMIQLF.

Residues 1 to 14 (MSISESSPAATSLP) show a composition bias toward polar residues. Positions 1-24 (MSISESSPAATSLPNGDCGRPRAR) are disordered. GTP-binding positions include 39–45 (GDEGKGK) and 67–69 (GHT). Asp-40 (proton acceptor) is an active-site residue. Positions 40 and 67 each coordinate Mg(2+). Asp-40 contributes to the substrate binding site. Residues 40–43 (DEGK), 65–68 (NAGH), Thr-162, Arg-176, Asn-255, Thr-270, and Arg-334 contribute to the IMP site. The active-site Proton donor is the His-68. 330-336 (VTTGRKR) provides a ligand contact to substrate. Residues Arg-336, 362–364 (KLD), and 444–447 (GVGK) each bind GTP.

Belongs to the adenylosuccinate synthetase family. As to quaternary structure, homodimer. It depends on Mg(2+) as a cofactor.

The protein localises to the cytoplasm. Its subcellular location is the mitochondrion. The catalysed reaction is IMP + L-aspartate + GTP = N(6)-(1,2-dicarboxyethyl)-AMP + GDP + phosphate + 2 H(+). Its pathway is purine metabolism; AMP biosynthesis via de novo pathway; AMP from IMP: step 1/2. With respect to regulation, inhibited competitively by AMP and IMP and non-competitively by fructose 1,6-bisphosphate. Its function is as follows. Plays an important role in the de novo pathway and in the salvage pathway of purine nucleotide biosynthesis. Catalyzes the first committed step in the biosynthesis of AMP from IMP. This Mus musculus (Mouse) protein is Adenylosuccinate synthetase isozyme 2 (Adss2).